Reading from the N-terminus, the 448-residue chain is tRNA modification GTPase MnmE (448 aa).

Residues Arg-22, Glu-83, and Arg-122 each coordinate (6S)-5-formyl-5,6,7,8-tetrahydrofolate. Positions 219 to 369 (GVKTVIVGRP…LESEILKTLK (151 aa)) constitute a TrmE-type G domain. Residue Asn-229 participates in K(+) binding. GTP contacts are provided by residues 229-234 (NVGKSS), 248-254 (SDIAGTT), and 273-276 (DTAG). Residue Ser-233 coordinates Mg(2+). Residues Ser-248, Ile-250, and Thr-253 each contribute to the K(+) site. Thr-254 lines the Mg(2+) pocket. Residue Lys-448 participates in (6S)-5-formyl-5,6,7,8-tetrahydrofolate binding.

The protein belongs to the TRAFAC class TrmE-Era-EngA-EngB-Septin-like GTPase superfamily. TrmE GTPase family. Homodimer. Heterotetramer of two MnmE and two MnmG subunits. K(+) is required as a cofactor.

Its subcellular location is the cytoplasm. In terms of biological role, exhibits a very high intrinsic GTPase hydrolysis rate. Involved in the addition of a carboxymethylaminomethyl (cmnm) group at the wobble position (U34) of certain tRNAs, forming tRNA-cmnm(5)s(2)U34. The protein is tRNA modification GTPase MnmE of Acholeplasma laidlawii (strain PG-8A).